Here is a 496-residue protein sequence, read N- to C-terminus: uncharacterized protein (496 aa).

The Mg(2+) site is built by Asp-36, Asp-81, Glu-300, Glu-302, Asp-321, Asp-323, and Asp-375.

Belongs to the XPG/RAD2 endonuclease family. FEN1 subfamily. It depends on Mg(2+) as a cofactor.

This is an uncharacterized protein from Schizosaccharomyces pombe (strain 972 / ATCC 24843) (Fission yeast).